The following is a 374-amino-acid chain: SKP1-interacting partner 15 (374 aa).

The 46-residue stretch at 3–48 (SSPVNCLPPDSLHQIFSSLPIRDIMICRSVCKFFNQLLTSQCFIEI) folds into the F-box domain.

As to quaternary structure, part of a SCF (ASK-cullin-F-box) protein ligase complex. Interacts with SKP1A/ASK1, SKP1B/ASK2, ASK11 and ASK13.

The protein localises to the nucleus. It participates in protein modification; protein ubiquitination. Its function is as follows. Component of SCF(ASK-cullin-F-box) E3 ubiquitin ligase complexes, which may mediate the ubiquitination and subsequent proteasomal degradation of target proteins. This is SKP1-interacting partner 15 (SKIP15) from Arabidopsis thaliana (Mouse-ear cress).